Consider the following 476-residue polypeptide: Aspartyl/glutamyl-tRNA(Asn/Gln) amidotransferase subunit B (476 aa).

Belongs to the GatB/GatE family. GatB subfamily. As to quaternary structure, heterotrimer of A, B and C subunits.

It carries out the reaction L-glutamyl-tRNA(Gln) + L-glutamine + ATP + H2O = L-glutaminyl-tRNA(Gln) + L-glutamate + ADP + phosphate + H(+). The catalysed reaction is L-aspartyl-tRNA(Asn) + L-glutamine + ATP + H2O = L-asparaginyl-tRNA(Asn) + L-glutamate + ADP + phosphate + 2 H(+). In terms of biological role, allows the formation of correctly charged Asn-tRNA(Asn) or Gln-tRNA(Gln) through the transamidation of misacylated Asp-tRNA(Asn) or Glu-tRNA(Gln) in organisms which lack either or both of asparaginyl-tRNA or glutaminyl-tRNA synthetases. The reaction takes place in the presence of glutamine and ATP through an activated phospho-Asp-tRNA(Asn) or phospho-Glu-tRNA(Gln). The protein is Aspartyl/glutamyl-tRNA(Asn/Gln) amidotransferase subunit B of Listeria monocytogenes serotype 4b (strain CLIP80459).